The sequence spans 259 residues: Small ribosomal subunit protein eS1 (259 aa).

The residue at position 2 (Ala-2) is an N-acetylalanine; partial.

This sequence belongs to the eukaryotic ribosomal protein eS1 family. In terms of assembly, component of the small ribosomal subunit. Mature ribosomes consist of a small (40S) and a large (60S) subunit. The 40S subunit contains about 33 different proteins and 1 molecule of RNA (18S). The 60S subunit contains about 49 different proteins and 3 molecules of RNA (25S, 5.8S and 5S).

Its subcellular location is the cytoplasm. This Cryptococcus neoformans var. neoformans serotype D (strain B-3501A) (Filobasidiella neoformans) protein is Small ribosomal subunit protein eS1.